A 410-amino-acid polypeptide reads, in one-letter code: Na(+)-translocating NADH-quinone reductase subunit B (410 aa).

3 helical membrane-spanning segments follow: residues Met56–Gly76, Leu119–Trp139, and Ser159–Ile179. Thr232 is modified (FMN phosphoryl threonine). 5 consecutive transmembrane segments (helical) span residues Gly266–Ala286, Ile293–Ser313, Met318–Phe338, Ser347–Ile367, and Gly377–Ala397.

This sequence belongs to the NqrB/RnfD family. As to quaternary structure, composed of six subunits; NqrA, NqrB, NqrC, NqrD, NqrE and NqrF. The cofactor is FMN.

It localises to the cell inner membrane. It carries out the reaction a ubiquinone + n Na(+)(in) + NADH + H(+) = a ubiquinol + n Na(+)(out) + NAD(+). Its function is as follows. NQR complex catalyzes the reduction of ubiquinone-1 to ubiquinol by two successive reactions, coupled with the transport of Na(+) ions from the cytoplasm to the periplasm. NqrA to NqrE are probably involved in the second step, the conversion of ubisemiquinone to ubiquinol. The chain is Na(+)-translocating NADH-quinone reductase subunit B from Neisseria meningitidis serogroup B (strain ATCC BAA-335 / MC58).